Here is a 346-residue protein sequence, read N- to C-terminus: Histidinol-phosphate aminotransferase (346 aa).

Position 209 is an N6-(pyridoxal phosphate)lysine (Lys-209).

Belongs to the class-II pyridoxal-phosphate-dependent aminotransferase family. Histidinol-phosphate aminotransferase subfamily. Homodimer. It depends on pyridoxal 5'-phosphate as a cofactor.

It carries out the reaction L-histidinol phosphate + 2-oxoglutarate = 3-(imidazol-4-yl)-2-oxopropyl phosphate + L-glutamate. It participates in amino-acid biosynthesis; L-histidine biosynthesis; L-histidine from 5-phospho-alpha-D-ribose 1-diphosphate: step 7/9. The sequence is that of Histidinol-phosphate aminotransferase from Vibrio vulnificus (strain YJ016).